A 687-amino-acid polypeptide reads, in one-letter code: Protein SDA1 homolog (687 aa).

A phosphoserine mark is found at Ser232, Ser234, and Ser236. The stretch at 254–315 forms a coiled coil; it reads KKGSKNKKKL…SCKERFEVKM (62 aa). The tract at residues 484-509 is disordered; sequence LEKGENTEDDEDGWESASLSEEEEED. Residues 490–509 are compositionally biased toward acidic residues; the sequence is TEDDEDGWESASLSEEEEED. Residue Thr552 is modified to Phosphothreonine. A phosphoserine mark is found at Ser585, Ser589, and Ser595. The interval 604-651 is disordered; that stretch reads KKPKSDKETRLATAMAGRTDRKEFVRKKTKINPFSSSTNKEKKKQKNF.

Belongs to the SDA1 family.

The protein resides in the nucleus. It localises to the nucleolus. Functionally, required for 60S pre-ribosomal subunits export to the cytoplasm. The polypeptide is Protein SDA1 homolog (Sdad1) (Mus musculus (Mouse)).